A 246-amino-acid polypeptide reads, in one-letter code: Serine protease 1 (246 aa).

The N-terminal stretch at 1–15 (MSALLILALVGAAVA) is a signal peptide. Positions 16–23 (FPLEDDDK) are cleaved as a propeptide — activation peptide. One can recognise a Peptidase S1 domain in the interval 24-244 (IVGGYTCPEH…FVGWIQDTIA (221 aa)). Intrachain disulfides connect C30-C160, C48-C64, C132-C233, C139-C206, C171-C185, and C196-C220. Catalysis depends on H63, which acts as the Charge relay system. Ca(2+) contacts are provided by E75, N77, V80, and E85. The Charge relay system role is filled by D107. S200 serves as the catalytic Charge relay system.

The protein belongs to the peptidase S1 family. Interacts with SERPINA1. The cofactor is Ca(2+).

The protein resides in the secreted. It localises to the extracellular space. The catalysed reaction is Preferential cleavage: Arg-|-Xaa, Lys-|-Xaa.. In Rattus norvegicus (Rat), this protein is Serine protease 1.